A 495-amino-acid chain; its full sequence is Membrane-bound glycerophospholipid O-acyltransferase 1 (495 aa).

Transmembrane regions (helical) follow at residues 34-54, 70-90, 126-146, 180-200, 238-258, and 297-317; these read VNFV…RIYL, IFGI…LFVL, IYIF…MIVT, PSFL…AGPC, TGAV…FLTL, and YFAW…FSGV. Residues asparagine 350 and histidine 381 contribute to the active site. A run of 3 helical transmembrane segments spans residues 371 to 391, 426 to 446, and 450 to 470; these read VLTF…YFTF, TWAV…MLAV, and ISLY…IILF. Phosphoserine is present on serine 488.

The protein belongs to the membrane-bound acyltransferase family. In terms of tissue distribution, expressed in neutrophils.

The protein localises to the endoplasmic reticulum membrane. It catalyses the reaction a 1-acyl-sn-glycero-3-phospho-L-serine + an acyl-CoA = a 1,2-diacyl-sn-glycero-3-phospho-L-serine + CoA. The catalysed reaction is a 1-acyl-sn-glycero-3-phosphocholine + an acyl-CoA = a 1,2-diacyl-sn-glycero-3-phosphocholine + CoA. The enzyme catalyses a 1-acyl-sn-glycero-3-phosphoethanolamine + an acyl-CoA = a 1,2-diacyl-sn-glycero-3-phosphoethanolamine + CoA. It carries out the reaction 1-(9Z-octadecenoyl)-sn-glycero-3-phospho-L-serine + (9Z)-octadecenoyl-CoA = 1,2-di-(9Z)-octadecenoyl-sn-glycero-3-phospho-L-serine + CoA. It catalyses the reaction 1-(9Z-octadecenoyl)-sn-glycero-3-phospho-L-serine + octadecanoyl-CoA = 1-(9Z-octadecenoyl)-2-octadecanoyl-sn-glycero-3-phospho-L-serine + CoA. The catalysed reaction is 1-(9Z-octadecenoyl)-sn-glycero-3-phospho-L-serine + (9Z)-hexadecenoyl-CoA = 1-(9Z-octadecenoyl)-2-(9Z-hexadecenoyl)-sn-glycero-3-phospho-L-serine + CoA. The enzyme catalyses 1-(9Z-octadecenoyl)-sn-glycero-3-phospho-L-serine + (9Z,12Z)-octadecadienoyl-CoA = 1-(9Z-octadecenoyl)-2-(9Z,12Z-octadienoyl)-sn-glycero-3-phospho-L-serine + CoA. It carries out the reaction 1-hexadecanoyl-sn-glycero-3-phosphocholine + (9Z)-octadecenoyl-CoA = 1-hexadecanoyl-2-(9Z-octadecenoyl)-sn-glycero-3-phosphocholine + CoA. It catalyses the reaction a 1-O-(1Z-alkenyl)-sn-glycero-3-phosphoethanolamine + (9Z)-octadecenoyl-CoA = 1-O-(1Z)-alkenyl-2-(9Z)-octadecenoyl-sn-glycero-3-phosphoethanolamine + CoA. The catalysed reaction is 1-octadecanoyl-sn-glycero-3-phosphoethanolamine + (9Z)-octadecenoyl-CoA = 1-octadecanoyl-2-(9Z-octadecenoyl)-sn-glycero-3-phosphoethanolamine + CoA. The enzyme catalyses 1-(9Z-octadecenoyl)-sn-glycero-3-phosphoethanolamine + (9Z)-octadecenoyl-CoA = 1,2-di-(9Z-octadecenoyl)-sn-glycero-3-phosphoethanolamine + CoA. It carries out the reaction 1-hexadecanoyl-sn-glycero-3-phosphoethanolamine + (9Z)-octadecenoyl-CoA = 1-hexadecanoyl-2-(9Z-octadecenoyl)-sn-glycero-3-phosphoethanolamine + CoA. It catalyses the reaction 1-(10Z-heptadecenoyl)-sn-glycero-3-phosphoethanolamine + hexadecanoyl-CoA = 1-(10Z-heptadecenoyl)-2-hexadecanoyl-sn-glycero-3-phosphoethanolamine + CoA. The catalysed reaction is 1-(10Z-heptadecenoyl)-sn-glycero-3-phosphoethanolamine + (9Z)-octadecenoyl-CoA = 1-(10Z-heptadecenoyl)-2-(9Z-octadecenoyl)-sn-glycero-3-phosphoethanolamine + CoA. Its pathway is lipid metabolism; phospholipid metabolism. Its activity is regulated as follows. Partially inhibited by thimerosal. Its function is as follows. Acyltransferase which catalyzes the transfer of an acyl group from an acyl-CoA towards a lysophospholipid producing a phospholipid and participates in the reacylation step of the phospholipid remodeling pathway also known as the Lands cycle. Acts on lysophosphatidylserine (1-acyl-2-hydroxy-sn-glycero-3-phospho-L-serine or LPS) and lysophosphatidylethanolamine (1-acyl-sn-glycero-3-phosphoethanolamine or LPE), and to a lesser extend lysophosphatidylcholine. Prefers oleoyl-CoA as the acyl donor and 1-oleoyl-LPE as acceptor. May play a role in neurite outgrowth during neuronal differentiation. The protein is Membrane-bound glycerophospholipid O-acyltransferase 1 of Homo sapiens (Human).